We begin with the raw amino-acid sequence, 500 residues long: Probable cytosol aminopeptidase (500 aa).

Positions 262 and 267 each coordinate Mn(2+). The active site involves lysine 274. 3 residues coordinate Mn(2+): aspartate 285, aspartate 344, and glutamate 346. Arginine 348 is an active-site residue.

Belongs to the peptidase M17 family. It depends on Mn(2+) as a cofactor.

The protein localises to the cytoplasm. It carries out the reaction Release of an N-terminal amino acid, Xaa-|-Yaa-, in which Xaa is preferably Leu, but may be other amino acids including Pro although not Arg or Lys, and Yaa may be Pro. Amino acid amides and methyl esters are also readily hydrolyzed, but rates on arylamides are exceedingly low.. The enzyme catalyses Release of an N-terminal amino acid, preferentially leucine, but not glutamic or aspartic acids.. Presumably involved in the processing and regular turnover of intracellular proteins. Catalyzes the removal of unsubstituted N-terminal amino acids from various peptides. The protein is Probable cytosol aminopeptidase of Ehrlichia ruminantium (strain Gardel).